The primary structure comprises 169 residues: Cell division inhibitor SulA (169 aa).

Residues 106–112 (ALRTGNY) are ftsZ binding. The lon protease binding stretch occupies residues 162–169 (KIHSNLYH).

The protein belongs to the SulA family. In terms of assembly, interacts with FtsZ. Is rapidly cleaved and degraded by the Lon protease once DNA damage is repaired.

Functionally, component of the SOS system and an inhibitor of cell division. Accumulation of SulA causes rapid cessation of cell division and the appearance of long, non-septate filaments. In the presence of GTP, binds a polymerization-competent form of FtsZ in a 1:1 ratio, thus inhibiting FtsZ polymerization and therefore preventing it from participating in the assembly of the Z ring. This mechanism prevents the premature segregation of damaged DNA to daughter cells during cell division. This is Cell division inhibitor SulA from Escherichia coli O7:K1 (strain IAI39 / ExPEC).